The following is a 252-amino-acid chain: Neurexophilin-3 (252 aa).

The N-terminal stretch at 1 to 22 (MQLTRCCFVFLVQGSLYLVICG) is a signal peptide. Residues 23–75 (QEDGPPGSEDPEHDDHEGQPRPRVPRKRGHISPKSRPLANSTLLGLLAPPGEV) form an II region. The segment at 27 to 59 (PPGSEDPEHDDHEGQPRPRVPRKRGHISPKSRP) is disordered. A compositionally biased stretch (basic residues) spans 45–55 (RVPRKRGHISP). 4 N-linked (GlcNAc...) asparagine glycosylation sites follow: Asn-62, Asn-127, Asn-137, and Asn-143. Positions 76-157 (WGILGQPPNR…LVPPSKAVEF (82 aa)) are III. Positions 158-166 (HQEQQIFIE) are IV (linker domain). The tract at residues 167-252 (AKASKIFNCR…HSDTPYYPSG (86 aa)) is v (Cys-rich).

The protein belongs to the neurexophilin family. In terms of processing, may be proteolytically processed at the boundary between the N-terminal non-conserved and the central conserved domain in neuron-like cells. Brain. Detected in several other tissues.

Its subcellular location is the secreted. Its function is as follows. May be signaling molecules that resemble neuropeptides. Ligand for alpha-neurexins. The protein is Neurexophilin-3 (Nxph3) of Rattus norvegicus (Rat).